Reading from the N-terminus, the 224-residue chain is UPF0173 metal-dependent hydrolase TK0141 (224 aa).

Belongs to the UPF0173 family.

This Thermococcus kodakarensis (strain ATCC BAA-918 / JCM 12380 / KOD1) (Pyrococcus kodakaraensis (strain KOD1)) protein is UPF0173 metal-dependent hydrolase TK0141.